The chain runs to 78 residues: Acyl carrier protein (78 aa).

Residues 2-77 (STIEERVKKI…AAIDYVTSHQ (76 aa)) form the Carrier domain. Residue serine 37 is modified to O-(pantetheine 4'-phosphoryl)serine.

This sequence belongs to the acyl carrier protein (ACP) family. 4'-phosphopantetheine is transferred from CoA to a specific serine of apo-ACP by AcpS. This modification is essential for activity because fatty acids are bound in thioester linkage to the sulfhydryl of the prosthetic group.

It is found in the cytoplasm. Its pathway is lipid metabolism; fatty acid biosynthesis. In terms of biological role, carrier of the growing fatty acid chain in fatty acid biosynthesis. This chain is Acyl carrier protein, found in Pseudomonas fluorescens (strain SBW25).